A 507-amino-acid chain; its full sequence is Glucose transporter type 3 (507 aa).

Residues 1–26 (MRKGGIQDAEPVEPPQSSRKSGTWFA) form a disordered region. Topologically, residues 1–53 (MRKGGIQDAEPVEPPQSSRKSGTWFAKRPSEMPERHVERAPVRQKINNVGLYK) are cytoplasmic. The chain crosses the membrane as a helical span at residues 54–74 (ATLYSNIGSFFFGIAVGWSGT). At 75-95 (AERSVMEQHSYSFQPTELQWS) the chain is on the extracellular side. The helical transmembrane segment at 96 to 116 (GVCILLTLGAALWCLPMGLMV) threads the bilayer. Over 117-124 (RLLGCRRT) the chain is Cytoplasmic. The chain crosses the membrane as a helical span at residues 125-145 (ILIQLLPNFLGWFLTVFARSV). The Extracellular segment spans residues 146–152 (PMLYAGR). The chain crosses the membrane as a helical span at residues 153–173 (FFLGMCGGAHCVVVPIYNAEI). The Cytoplasmic segment spans residues 174–183 (STTKKRGAMG). A helical membrane pass occupies residues 184–204 (VVFEGACICGVIYSFAMSLFL). Residues 205–207 (ELR) are Extracellular-facing. Residues 208–228 (IINFVNLGLLALGPLQILMPE) traverse the membrane as a helical segment. Topologically, residues 229–293 (SPAYYVDHGN…YKKVRRSLAR (65 aa)) are cytoplasmic. The helical transmembrane segment at 294 to 314 (SLAIALLQKLCGALIFIFYGL) threads the bilayer. Residues 315–324 (NMLDCLRIRR) are Extracellular-facing. The chain crosses the membrane as a helical span at residues 325–345 (EFGLILCLGLILGFLACFFLV). The Cytoplasmic portion of the chain corresponds to 346 to 351 (DRLGRR). The helical transmembrane segment at 352–372 (PLLIFSSAGIVFVSIYLGLHF) threads the bilayer. Over 373 to 374 (KV) the chain is Extracellular. The chain crosses the membrane as a helical span at residues 375–395 (WMTMGLTVMSWIALFCIAIFV). At 396–420 (GCYTAGVGSLTWVLNAELLVRPMRP) the chain is on the cytoplasmic side. A helical transmembrane segment spans residues 421 to 441 (LGCSIVCAFNWLTAFFVICWF). The Extracellular segment spans residues 442–450 (GSHGVKCQP). Residues 451–471 (YLFLLFAIIASLILLFSLIYI) traverse the membrane as a helical segment. The Cytoplasmic portion of the chain corresponds to 472–507 (PETKKLSSAKIQQRLGGLINRPAVITFTSSSDSSNA).

This sequence belongs to the major facilitator superfamily. Sugar transporter (TC 2.A.1.1) family. Glucose transporter subfamily.

It is found in the cell membrane. The protein resides in the perikaryon. Its subcellular location is the cell projection. Its function is as follows. Facilitative glucose transporter that can also mediate the uptake of various other monosaccharides across the cell membrane. This is Glucose transporter type 3 (Glut3) from Drosophila melanogaster (Fruit fly).